Here is a 112-residue protein sequence, read N- to C-terminus: Nucleoid-associated protein CPR_0056 (112 aa).

Residues 91–100 (ASEETSEKMG) are compositionally biased toward basic and acidic residues. Residues 91-112 (ASEETSEKMGKLTGGMGMPGLF) form a disordered region. Gly residues predominate over residues 102 to 112 (LTGGMGMPGLF).

It belongs to the YbaB/EbfC family. Homodimer.

The protein resides in the cytoplasm. The protein localises to the nucleoid. Binds to DNA and alters its conformation. May be involved in regulation of gene expression, nucleoid organization and DNA protection. The sequence is that of Nucleoid-associated protein CPR_0056 from Clostridium perfringens (strain SM101 / Type A).